Consider the following 378-residue polypeptide: MDIDPKDITISKEFQSIVVPKQLTGPVKAILQEKKLSATETKNVVDDPNGKRIILIPEVTELPKEVLEKVPEAKLEPYPVTLTYKQLTYIELLRHYIPEPLVIPTSFETIGHIAHLNLPDELLPYKKVIGECIILKNPCIKTVAIKQGPINNVYRNMELEVIAGKNDFITEVKQSGFTFKMDFSKVYWNSRLQYEHDSVVATFKENSLVCDAMCGIGPFAVRAAKKGCRVRANDLNPDSYYWLKENCKINGVSENVECFNMDAREFIRKQFDNGGCDYIVMNLPGTAVEFLDAIGEGAKKNRETARMPIVIFHSFDNKDGDYVASLRARAEKALGMKLPEMDIHNVRDVSPGKFMFRCTFSCADLFADEDDDKPHKVE.

S-adenosyl-L-methionine is bound by residues His-196, Asp-234–Leu-235, Asp-262–Ala-263, and Asn-282.

The protein belongs to the class I-like SAM-binding methyltransferase superfamily. TRM5/TYW2 family. In terms of assembly, monomer.

It is found in the mitochondrion matrix. It localises to the nucleus. The protein resides in the cytoplasm. It carries out the reaction guanosine(37) in tRNA + S-adenosyl-L-methionine = N(1)-methylguanosine(37) in tRNA + S-adenosyl-L-homocysteine + H(+). Specifically methylates the N1 position of guanosine-37 in various cytoplasmic and mitochondrial tRNAs. Methylation is not dependent on the nature of the nucleoside 5' of the target nucleoside. This is the first step in the biosynthesis of wybutosine (yW), a modified base adjacent to the anticodon of tRNAs and required for accurate decoding. The polypeptide is tRNA (guanine(37)-N(1))-methyltransferase (Trichomonas vaginalis (strain ATCC PRA-98 / G3)).